An 81-amino-acid chain; its full sequence is Large ribosomal subunit protein bL31B (81 aa).

This sequence belongs to the bacterial ribosomal protein bL31 family. Type B subfamily. As to quaternary structure, part of the 50S ribosomal subunit.

This is Large ribosomal subunit protein bL31B from Lactobacillus acidophilus (strain ATCC 700396 / NCK56 / N2 / NCFM).